Reading from the N-terminus, the 564-residue chain is O-fucosyltransferase 5 (564 aa).

The interval 1–28 (MVRNSSDEEEDHRNLIPQNDTRDNDLNL) is disordered. The chain crosses the membrane as a helical; Signal-anchor for type II membrane protein span at residues 70–90 (YVVAAVSLTLFVGLLFLFTDT). N-linked (GlcNAc...) asparagine glycans are attached at residues asparagine 129, asparagine 134, and asparagine 174. Residues 413–415 (HLR) and 529–530 (TF) each bind substrate.

It belongs to the glycosyltransferase GT106 family.

The protein resides in the membrane. It participates in glycan metabolism. The protein is O-fucosyltransferase 5 of Arabidopsis thaliana (Mouse-ear cress).